We begin with the raw amino-acid sequence, 890 residues long: Bacteriocin BCN5 (890 aa).

2 consecutive SH3b domains span residues 22 to 84 (PPNA…TNAT) and 179 to 241 (ENNA…TNAT). Positions 303–549 (GYVKYEGAAA…RYLQKIINAV (247 aa)) constitute a Peptidase M14 domain. Zn(2+)-binding residues include histidine 358, glutamate 361, and histidine 475. Glutamate 525 acts as the Proton donor/acceptor in catalysis. An SH3b 3 domain is found at 572-636 (EATGEVINVQ…VNSGYIIILK (65 aa)). The tract at residues 815 to 869 (KALAAAVIVNGVETMFCAFLGGFIAQCIAPEFPIVAAVAGAIVSAIAAFAIGYFV) is hydrophobic.

It depends on Zn(2+) as a cofactor.

In terms of biological role, may function as an ionophore. The protein is Bacteriocin BCN5 (bcn) of Clostridium perfringens.